Here is a 1048-residue protein sequence, read N- to C-terminus: Nonsense-mediated mRNA decay protein 5 (1048 aa).

Positions 24–104 (AETHLKNASK…KDMLIKTMVS (81 aa)) constitute an Importin N-terminal domain. Position 977 is a phosphoserine (Ser-977).

As to quaternary structure, GTP-bound Ran dissociates the isolated NMD5/TFIIS complex.

It localises to the nucleus. The protein localises to the cytoplasm. Functionally, active in protein import into the nucleus. Its major import substrate is transcription elongation factor TFIIS. The protein is Nonsense-mediated mRNA decay protein 5 (NMD5) of Saccharomyces cerevisiae (strain ATCC 204508 / S288c) (Baker's yeast).